We begin with the raw amino-acid sequence, 426 residues long: Glutamate-1-semialdehyde 2,1-aminomutase (426 aa).

K265 carries the post-translational modification N6-(pyridoxal phosphate)lysine.

This sequence belongs to the class-III pyridoxal-phosphate-dependent aminotransferase family. HemL subfamily. Homodimer. Requires pyridoxal 5'-phosphate as cofactor.

Its subcellular location is the cytoplasm. It catalyses the reaction (S)-4-amino-5-oxopentanoate = 5-aminolevulinate. It participates in porphyrin-containing compound metabolism; protoporphyrin-IX biosynthesis; 5-aminolevulinate from L-glutamyl-tRNA(Glu): step 2/2. This is Glutamate-1-semialdehyde 2,1-aminomutase from Pectobacterium carotovorum subsp. carotovorum (strain PC1).